The chain runs to 239 residues: Large ribosomal subunit protein uL1 (239 aa).

This sequence belongs to the universal ribosomal protein uL1 family. In terms of assembly, part of the 50S ribosomal subunit.

Its function is as follows. Binds directly to 23S rRNA. The L1 stalk is quite mobile in the ribosome, and is involved in E site tRNA release. Functionally, protein L1 is also a translational repressor protein, it controls the translation of the L11 operon by binding to its mRNA. The polypeptide is Large ribosomal subunit protein uL1 (Rickettsia bellii (strain OSU 85-389)).